Consider the following 737-residue polypeptide: Translation initiation factor IF-2 (737 aa).

The disordered stretch occupies residues 55-152 (KKKEHIQHNK…PVPPRKNKPL (98 aa)). Residues 60-70 (IQHNKNKDNFH) are compositionally biased toward basic and acidic residues. The segment covering 88–98 (KNVHKNNRKRS) has biased composition (basic residues). The segment covering 105 to 121 (NNNAKNGQRNNRNNRSN) has biased composition (low complexity). A compositionally biased stretch (basic residues) spans 122-131 (NKFKNKRNNN). Over residues 132–142 (NKRNNNFKKGN) the composition is skewed to low complexity. In terms of domain architecture, tr-type G spans 238-407 (KRPPVVTIMG…LLEAEMLELH (170 aa)). The G1 stretch occupies residues 247 to 254 (GHVDHGKT). 247–254 (GHVDHGKT) serves as a coordination point for GTP. A G2 region spans residues 272 to 276 (GITQH). The G3 stretch occupies residues 293 to 296 (DTPG). Residues 293 to 297 (DTPGH) and 347 to 350 (NKID) contribute to the GTP site. A G4 region spans residues 347-350 (NKID). The segment at 383–385 (SAK) is G5.

It belongs to the TRAFAC class translation factor GTPase superfamily. Classic translation factor GTPase family. IF-2 subfamily.

It is found in the cytoplasm. One of the essential components for the initiation of protein synthesis. Protects formylmethionyl-tRNA from spontaneous hydrolysis and promotes its binding to the 30S ribosomal subunits. Also involved in the hydrolysis of GTP during the formation of the 70S ribosomal complex. The polypeptide is Translation initiation factor IF-2 (Ligilactobacillus salivarius (strain UCC118) (Lactobacillus salivarius)).